A 344-amino-acid polypeptide reads, in one-letter code: Dihydroorotase (344 aa).

The Zn(2+) site is built by histidine 14 and histidine 16. Residues 16–18 and asparagine 42 contribute to the substrate site; that span reads HLR. Zn(2+)-binding residues include lysine 100, histidine 137, and histidine 175. An N6-carboxylysine modification is found at lysine 100. Residue histidine 137 coordinates substrate. Substrate is bound at residue leucine 220. Aspartate 248 serves as a coordination point for Zn(2+). Residue aspartate 248 is part of the active site. Residues histidine 252 and alanine 264 each contribute to the substrate site.

The protein belongs to the metallo-dependent hydrolases superfamily. DHOase family. Class II DHOase subfamily. As to quaternary structure, homodimer. Zn(2+) is required as a cofactor.

The catalysed reaction is (S)-dihydroorotate + H2O = N-carbamoyl-L-aspartate + H(+). It participates in pyrimidine metabolism; UMP biosynthesis via de novo pathway; (S)-dihydroorotate from bicarbonate: step 3/3. Catalyzes the reversible cyclization of carbamoyl aspartate to dihydroorotate. The chain is Dihydroorotase from Ralstonia pickettii (strain 12J).